The chain runs to 155 residues: 6,7-dimethyl-8-ribityllumazine synthase (155 aa).

Residues F24, 58-60 (AFE), and 82-84 (AII) each bind 5-amino-6-(D-ribitylamino)uracil. 87-88 (ST) serves as a coordination point for (2S)-2-hydroxy-3-oxobutyl phosphate. H90 acts as the Proton donor in catalysis. 5-amino-6-(D-ribitylamino)uracil is bound at residue F115. R129 serves as a coordination point for (2S)-2-hydroxy-3-oxobutyl phosphate.

It belongs to the DMRL synthase family.

The enzyme catalyses (2S)-2-hydroxy-3-oxobutyl phosphate + 5-amino-6-(D-ribitylamino)uracil = 6,7-dimethyl-8-(1-D-ribityl)lumazine + phosphate + 2 H2O + H(+). It participates in cofactor biosynthesis; riboflavin biosynthesis; riboflavin from 2-hydroxy-3-oxobutyl phosphate and 5-amino-6-(D-ribitylamino)uracil: step 1/2. Functionally, catalyzes the formation of 6,7-dimethyl-8-ribityllumazine by condensation of 5-amino-6-(D-ribitylamino)uracil with 3,4-dihydroxy-2-butanone 4-phosphate. This is the penultimate step in the biosynthesis of riboflavin. This chain is 6,7-dimethyl-8-ribityllumazine synthase, found in Chlorobium phaeovibrioides (strain DSM 265 / 1930) (Prosthecochloris vibrioformis (strain DSM 265)).